The following is a 264-amino-acid chain: Phosphonoacetaldehyde hydrolase (264 aa).

The active-site Nucleophile is the Asp9. Mg(2+)-binding residues include Asp9 and Ala11. The active-site Schiff-base intermediate with substrate is the Lys50. Residue Asp183 coordinates Mg(2+).

This sequence belongs to the HAD-like hydrolase superfamily. PhnX family. Homodimer. Mg(2+) is required as a cofactor.

It carries out the reaction phosphonoacetaldehyde + H2O = acetaldehyde + phosphate + H(+). Its function is as follows. Involved in phosphonate degradation. The sequence is that of Phosphonoacetaldehyde hydrolase from Bacillus cereus (strain ATCC 14579 / DSM 31 / CCUG 7414 / JCM 2152 / NBRC 15305 / NCIMB 9373 / NCTC 2599 / NRRL B-3711).